The following is a 520-amino-acid chain: Bifunctional purine biosynthesis protein PurH (520 aa).

One can recognise an MGS-like domain in the interval methionine 1–valine 150.

Belongs to the PurH family.

It catalyses the reaction (6R)-10-formyltetrahydrofolate + 5-amino-1-(5-phospho-beta-D-ribosyl)imidazole-4-carboxamide = 5-formamido-1-(5-phospho-D-ribosyl)imidazole-4-carboxamide + (6S)-5,6,7,8-tetrahydrofolate. It carries out the reaction IMP + H2O = 5-formamido-1-(5-phospho-D-ribosyl)imidazole-4-carboxamide. It participates in purine metabolism; IMP biosynthesis via de novo pathway; 5-formamido-1-(5-phospho-D-ribosyl)imidazole-4-carboxamide from 5-amino-1-(5-phospho-D-ribosyl)imidazole-4-carboxamide (10-formyl THF route): step 1/1. The protein operates within purine metabolism; IMP biosynthesis via de novo pathway; IMP from 5-formamido-1-(5-phospho-D-ribosyl)imidazole-4-carboxamide: step 1/1. The protein is Bifunctional purine biosynthesis protein PurH of Corynebacterium glutamicum (strain R).